The primary structure comprises 593 residues: MTPVGMDRKSLSLLILIVLLGLCIRLQNFGEIFDSRIYYYGYDPYYHMRLVEAIVLEGYRPSFDYYINYPYGLRIDWLPLFDYILAFPGLFLGFWASEIFAVVFPVIIGVLCIVLVYLISLEVLRNEKFALISAFIFSVCPVTVWKSLLGKADHHIWVVFLLLLSIWLVTKPGLLKLLSGIPMLLMALSWLGAPIYAALLAVSSLFQFNEKEVRIVGISNLIPVLSSIQNLFLGFSFLAIAVFLLVGSFVKRFERRFRYAIVYYLCICSVALLSAYLMPVGWLGFVKSGISYVLGTDIYLPTIREARSFQILGVISSAGYLFFVLAIPALFMLRNGFLKVFFVLSFLISILQLRFVEVLAFPVAILASYTICQILERVDYPVFRKEEEGESKRRGRKEKKKAVEIRKKDHATVIAFLLFLALPCFANSLAPVEMTMDWKEALNWMKENLEAQDYLKAYEKPDYAVLSWWDYGNWILYVAKKAVVCNNFQAGADDAAKFFTAQSEEEAMKIVEKRKVRYVVTVEELTVKPETNKTKFIPIMQIAGYSPEYMKNKEIIDFFNKTMLYKLHVENATNLTHFRLLKNFGTVKIFEVK.

At 1–12 the chain is on the cytoplasmic side; the sequence is MTPVGMDRKSLS. The chain crosses the membrane as a helical span at residues 13–33; the sequence is LLILIVLLGLCIRLQNFGEIF. Residues 34–98 lie on the Extracellular side of the membrane; that stretch reads DSRIYYYGYD…GLFLGFWASE (65 aa). The short motif at 41–43 is the DXD motif 1 element; the sequence is GYD. Asp-43 lines the Mn(2+) pocket. The helical transmembrane segment at 99 to 119 threads the bilayer; that stretch reads IFAVVFPVIIGVLCIVLVYLI. The Cytoplasmic segment spans residues 120 to 128; it reads SLEVLRNEK. Residues 129–149 form a helical membrane-spanning segment; it reads FALISAFIFSVCPVTVWKSLL. The Extracellular portion of the chain corresponds to 150–154; that stretch reads GKADH. Asp-153 contributes to the Mn(2+) binding site. Positions 153-155 match the DXD motif 2 motif; sequence DHH. His-154 contacts a glycophospholipid. His-155 provides a ligand contact to Mn(2+). The helical transmembrane segment at 155 to 175 threads the bilayer; it reads HIWVVFLLLLSIWLVTKPGLL. Over 176 to 180 the chain is Cytoplasmic; that stretch reads KLLSG. A helical transmembrane segment spans residues 181–201; sequence IPMLLMALSWLGAPIYAALLA. Over 202-229 the chain is Extracellular; it reads VSSLFQFNEKEVRIVGISNLIPVLSSIQ. The chain crosses the membrane as a helical span at residues 230–250; that stretch reads NLFLGFSFLAIAVFLLVGSFV. The Cytoplasmic portion of the chain corresponds to 251-265; it reads KRFERRFRYAIVYYL. Residues 266-286 form a helical membrane-spanning segment; sequence CICSVALLSAYLMPVGWLGFV. Residues 287–310 are Extracellular-facing; the sequence is KSGISYVLGTDIYLPTIREARSFQ. The TIXE motif signature appears at 302-305; sequence TIRE. The chain crosses the membrane as a helical span at residues 311–331; the sequence is ILGVISSAGYLFFVLAIPALF. Met-332 is a topological domain (cytoplasmic). A helical membrane pass occupies residues 333–353; that stretch reads LRNGFLKVFFVLSFLISILQL. A topological domain (extracellular) is located at residue Arg-354. An a glycophospholipid-binding site is contributed by Arg-354. A helical membrane pass occupies residues 355 to 375; sequence FVEVLAFPVAILASYTICQIL. At 376-411 the chain is on the cytoplasmic side; the sequence is ERVDYPVFRKEEEGESKRRGRKEKKKAVEIRKKDHA. A helical membrane pass occupies residues 412 to 432; the sequence is TVIAFLLFLALPCFANSLAPV. The Extracellular portion of the chain corresponds to 433-593; that stretch reads EMTMDWKEAL…FGTVKIFEVK (161 aa). Positions 468–470 are interacts with target acceptor peptide in protein substrate; that stretch reads WWD. The WWDYG motif motif lies at 468–472; sequence WWDYG. Positions 524-539 match the DKi motif motif; sequence ELTVKPETNKTKFIPI.

This sequence belongs to the STT3 family. The cofactor is Mn(2+). Mg(2+) serves as cofactor. Requires Zn(2+) as cofactor.

Its subcellular location is the cell membrane. It carries out the reaction an archaeal dolichyl phosphooligosaccharide + [protein]-L-asparagine = an archaeal dolichyl phosphate + a glycoprotein with the oligosaccharide chain attached by N-beta-D-glycosyl linkage to a protein L-asparagine.. It participates in protein modification; protein glycosylation. Its function is as follows. Oligosaccharyl transferase (OST) that catalyzes the initial transfer of a defined glycan (a GalNAc-linked heptasaccharide composed of 4 Hex, 3 dHex and a sulfate for A.fulgidus AglB-S) from the lipid carrier dolichol-monophosphate to an asparagine residue within an Asn-X-Ser/Thr consensus motif in nascent polypeptide chains, the first step in protein N-glycosylation. The protein is Dolichyl-phosphooligosaccharide-protein glycotransferase 2 (aglB2) of Archaeoglobus fulgidus (strain ATCC 49558 / DSM 4304 / JCM 9628 / NBRC 100126 / VC-16).